Reading from the N-terminus, the 321-residue chain is Lipoyl synthase (321 aa).

7 residues coordinate [4Fe-4S] cluster: cysteine 68, cysteine 73, cysteine 79, cysteine 94, cysteine 98, cysteine 101, and serine 308. Residues phenylalanine 80–threonine 297 form the Radical SAM core domain.

It belongs to the radical SAM superfamily. Lipoyl synthase family. Requires [4Fe-4S] cluster as cofactor.

It localises to the cytoplasm. The catalysed reaction is [[Fe-S] cluster scaffold protein carrying a second [4Fe-4S](2+) cluster] + N(6)-octanoyl-L-lysyl-[protein] + 2 oxidized [2Fe-2S]-[ferredoxin] + 2 S-adenosyl-L-methionine + 4 H(+) = [[Fe-S] cluster scaffold protein] + N(6)-[(R)-dihydrolipoyl]-L-lysyl-[protein] + 4 Fe(3+) + 2 hydrogen sulfide + 2 5'-deoxyadenosine + 2 L-methionine + 2 reduced [2Fe-2S]-[ferredoxin]. It functions in the pathway protein modification; protein lipoylation via endogenous pathway; protein N(6)-(lipoyl)lysine from octanoyl-[acyl-carrier-protein]: step 2/2. Its function is as follows. Catalyzes the radical-mediated insertion of two sulfur atoms into the C-6 and C-8 positions of the octanoyl moiety bound to the lipoyl domains of lipoate-dependent enzymes, thereby converting the octanoylated domains into lipoylated derivatives. This Shewanella woodyi (strain ATCC 51908 / MS32) protein is Lipoyl synthase.